The chain runs to 201 residues: Protein Thf1 (201 aa).

The stretch at 174-201 forms a coiled coil; that stretch reads IYKSSISKMEQAKELIQEQRIKDKKKTL.

This sequence belongs to the THF1 family.

Its function is as follows. May be involved in photosynthetic membrane biogenesis. This chain is Protein Thf1, found in Prochlorococcus marinus (strain MIT 9312).